The primary structure comprises 261 residues: MSRIAETFAYLRAAGRTALMPYLMTGYPERDSALELAPALEAAGADLFELGVPFSDPLADGATIQRASERALANGIRLEHCIETVAGLRKRGVRAPIVPMGYYNPFLQYGLERLARDMADAGADGLIIPDLPPEEAHECHAACRAHGLDLIFFVAPTTPDERIDRIAALASGFIYCVALTGVTGARRELWSGLPAFLERVRRRTSLPLVVGFGISSAAHVREAGRYAAGAIVASALINVIEQAPPGEYVARAVDFVRSLRG.

Residues Glu49 and Asp60 each act as proton acceptor in the active site.

Belongs to the TrpA family. In terms of assembly, tetramer of two alpha and two beta chains.

The catalysed reaction is (1S,2R)-1-C-(indol-3-yl)glycerol 3-phosphate + L-serine = D-glyceraldehyde 3-phosphate + L-tryptophan + H2O. Its pathway is amino-acid biosynthesis; L-tryptophan biosynthesis; L-tryptophan from chorismate: step 5/5. The alpha subunit is responsible for the aldol cleavage of indoleglycerol phosphate to indole and glyceraldehyde 3-phosphate. In Roseiflexus sp. (strain RS-1), this protein is Tryptophan synthase alpha chain.